Here is a 253-residue protein sequence, read N- to C-terminus: Glucosamine-6-phosphate deaminase (253 aa).

Asp67 serves as the catalytic Proton acceptor; for enolization step. The active-site For ring-opening step is the Asn136. Residue His138 is the Proton acceptor; for ring-opening step of the active site. Glu143 acts as the For ring-opening step in catalysis.

The protein belongs to the glucosamine/galactosamine-6-phosphate isomerase family. NagB subfamily.

It carries out the reaction alpha-D-glucosamine 6-phosphate + H2O = beta-D-fructose 6-phosphate + NH4(+). The protein operates within amino-sugar metabolism; N-acetylneuraminate degradation; D-fructose 6-phosphate from N-acetylneuraminate: step 5/5. Functionally, catalyzes the reversible isomerization-deamination of glucosamine 6-phosphate (GlcN6P) to form fructose 6-phosphate (Fru6P) and ammonium ion. The chain is Glucosamine-6-phosphate deaminase from Thermoanaerobacter pseudethanolicus (strain ATCC 33223 / 39E) (Clostridium thermohydrosulfuricum).